The primary structure comprises 184 residues: Elongation factor P (184 aa).

Belongs to the elongation factor P family.

It is found in the cytoplasm. Its pathway is protein biosynthesis; polypeptide chain elongation. In terms of biological role, involved in peptide bond synthesis. Stimulates efficient translation and peptide-bond synthesis on native or reconstituted 70S ribosomes in vitro. Probably functions indirectly by altering the affinity of the ribosome for aminoacyl-tRNA, thus increasing their reactivity as acceptors for peptidyl transferase. In Polaromonas naphthalenivorans (strain CJ2), this protein is Elongation factor P.